We begin with the raw amino-acid sequence, 375 residues long: Biotin synthase, mitochondrial (375 aa).

The N-terminal 16 residues, 1–16, are a transit peptide targeting the mitochondrion; the sequence is MMSTIYRHLSTARPAL. The region spanning 81-310 is the Radical SAM core domain; sequence HDPTKVQLCT…IATARIVMPK (230 aa). 3 residues coordinate [4Fe-4S] cluster: cysteine 99, cysteine 103, and cysteine 106. Residues cysteine 143, cysteine 176, cysteine 236, and arginine 314 each coordinate [2Fe-2S] cluster.

Belongs to the radical SAM superfamily. Biotin synthase family. Requires [4Fe-4S] cluster as cofactor. [2Fe-2S] cluster serves as cofactor.

The protein resides in the mitochondrion. The enzyme catalyses (4R,5S)-dethiobiotin + (sulfur carrier)-SH + 2 reduced [2Fe-2S]-[ferredoxin] + 2 S-adenosyl-L-methionine = (sulfur carrier)-H + biotin + 2 5'-deoxyadenosine + 2 L-methionine + 2 oxidized [2Fe-2S]-[ferredoxin]. It participates in cofactor biosynthesis; biotin biosynthesis; biotin from 7,8-diaminononanoate: step 2/2. This Saccharomyces cerevisiae (strain ATCC 204508 / S288c) (Baker's yeast) protein is Biotin synthase, mitochondrial (BIO2).